Reading from the N-terminus, the 243-residue chain is Carboxy-S-adenosyl-L-methionine synthase (243 aa).

Residues tyrosine 39, 64–66 (GCS), asparagine 132, and arginine 199 each bind S-adenosyl-L-methionine.

This sequence belongs to the class I-like SAM-binding methyltransferase superfamily. Cx-SAM synthase family. In terms of assembly, homodimer.

It carries out the reaction prephenate + S-adenosyl-L-methionine = carboxy-S-adenosyl-L-methionine + 3-phenylpyruvate + H2O. Its function is as follows. Catalyzes the conversion of S-adenosyl-L-methionine (SAM) to carboxy-S-adenosyl-L-methionine (Cx-SAM). In Alteromonas mediterranea (strain DSM 17117 / CIP 110805 / LMG 28347 / Deep ecotype), this protein is Carboxy-S-adenosyl-L-methionine synthase.